We begin with the raw amino-acid sequence, 425 residues long: UPF0229 protein ETA_15540 (425 aa).

A disordered region spans residues 60–111 (NEPSFHQGRGGERYRVHPGNDHFVQNDRVDRPQGGGAGGSGQGNAGKDGEGQ). Positions 68–90 (RGGERYRVHPGNDHFVQNDRVDR) are enriched in basic and acidic residues. The span at 92–105 (QGGGAGGSGQGNAG) shows a compositional bias: gly residues.

The protein belongs to the UPF0229 family.

The chain is UPF0229 protein ETA_15540 from Erwinia tasmaniensis (strain DSM 17950 / CFBP 7177 / CIP 109463 / NCPPB 4357 / Et1/99).